A 132-amino-acid chain; its full sequence is Large ribosomal subunit protein bL17 (132 aa).

Belongs to the bacterial ribosomal protein bL17 family. As to quaternary structure, part of the 50S ribosomal subunit. Contacts protein L32.

The polypeptide is Large ribosomal subunit protein bL17 (Albidiferax ferrireducens (strain ATCC BAA-621 / DSM 15236 / T118) (Rhodoferax ferrireducens)).